The primary structure comprises 307 residues: Adenosylcobinamide-GDP ribazoletransferase (307 aa).

8 helical membrane passes run 22–42, 58–78, 80–100, 137–157, 161–181, 212–232, 248–268, and 283–303; these read PLFEGIFTALNWMTVLPVPGA, PFVGFVFGMFTAIIMWAIGPI, GVIHVDGLLVAVLIVAFWELL, FGLATAMLSVLLQVAAVASLV, VWWMICFIPVLGRIAGQVTAL, TAALAFWCAELISPLSPLTSV, AWLGGWVAITAVVACVFAALF, and CIGACIHLGASISAVMFAVVA.

Belongs to the CobS family. Mg(2+) serves as cofactor.

Its subcellular location is the cell membrane. It catalyses the reaction alpha-ribazole + adenosylcob(III)inamide-GDP = adenosylcob(III)alamin + GMP + H(+). The enzyme catalyses alpha-ribazole 5'-phosphate + adenosylcob(III)inamide-GDP = adenosylcob(III)alamin 5'-phosphate + GMP + H(+). It participates in cofactor biosynthesis; adenosylcobalamin biosynthesis; adenosylcobalamin from cob(II)yrinate a,c-diamide: step 7/7. Its function is as follows. Joins adenosylcobinamide-GDP and alpha-ribazole to generate adenosylcobalamin (Ado-cobalamin). Also synthesizes adenosylcobalamin 5'-phosphate from adenosylcobinamide-GDP and alpha-ribazole 5'-phosphate. In Corynebacterium glutamicum (strain ATCC 13032 / DSM 20300 / JCM 1318 / BCRC 11384 / CCUG 27702 / LMG 3730 / NBRC 12168 / NCIMB 10025 / NRRL B-2784 / 534), this protein is Adenosylcobinamide-GDP ribazoletransferase.